The primary structure comprises 381 residues: EPS I polysaccharide export outer membrane protein EpsA (381 aa).

The signal sequence occupies residues 1 to 23 (MFVSIPNIRKAVVSLSVVPLLAA). C24 carries the N-palmitoyl cysteine lipid modification. C24 carries the S-diacylglycerol cysteine lipid modification.

The protein belongs to the BexD/CtrA/VexA family.

It localises to the cell outer membrane. Its function is as follows. Probably involved in polymerization and/or export of exopolysaccharide EPS I which functions as a virulence factor. This is EPS I polysaccharide export outer membrane protein EpsA (epsA) from Ralstonia nicotianae (strain ATCC BAA-1114 / GMI1000) (Ralstonia solanacearum).